Here is an 81-residue protein sequence, read N- to C-terminus: Costars family protein ABRACL (81 aa).

The protein belongs to the costars family.

This Xenopus tropicalis (Western clawed frog) protein is Costars family protein ABRACL (abracl).